A 234-amino-acid chain; its full sequence is 7-cyano-7-deazaguanine synthase (234 aa).

Residue 15–25 (LSGGLDSSTCL) coordinates ATP. Zn(2+) is bound by residues cysteine 199, cysteine 208, cysteine 211, and cysteine 214.

Belongs to the QueC family. The cofactor is Zn(2+).

It carries out the reaction 7-carboxy-7-deazaguanine + NH4(+) + ATP = 7-cyano-7-deazaguanine + ADP + phosphate + H2O + H(+). The protein operates within purine metabolism; 7-cyano-7-deazaguanine biosynthesis. Functionally, catalyzes the ATP-dependent conversion of 7-carboxy-7-deazaguanine (CDG) to 7-cyano-7-deazaguanine (preQ(0)). The protein is 7-cyano-7-deazaguanine synthase of Anaeromyxobacter dehalogenans (strain 2CP-C).